The sequence spans 234 residues: 7-cyano-7-deazaguanine synthase (234 aa).

15-25 (LSGGLDSSTCL) is a binding site for ATP. 4 residues coordinate Zn(2+): C199, C208, C211, and C214.

The protein belongs to the QueC family. Zn(2+) is required as a cofactor.

The catalysed reaction is 7-carboxy-7-deazaguanine + NH4(+) + ATP = 7-cyano-7-deazaguanine + ADP + phosphate + H2O + H(+). The protein operates within purine metabolism; 7-cyano-7-deazaguanine biosynthesis. Its function is as follows. Catalyzes the ATP-dependent conversion of 7-carboxy-7-deazaguanine (CDG) to 7-cyano-7-deazaguanine (preQ(0)). The polypeptide is 7-cyano-7-deazaguanine synthase (Anaeromyxobacter dehalogenans (strain 2CP-C)).